The sequence spans 770 residues: 1,4-alpha-glucan branching enzyme GlgB (770 aa).

The Nucleophile role is filled by Asp-437. The Proton donor role is filled by Glu-488.

Belongs to the glycosyl hydrolase 13 family. GlgB subfamily. Monomer.

The enzyme catalyses Transfers a segment of a (1-&gt;4)-alpha-D-glucan chain to a primary hydroxy group in a similar glucan chain.. It participates in glycan biosynthesis; glycogen biosynthesis. Catalyzes the formation of the alpha-1,6-glucosidic linkages in glycogen by scission of a 1,4-alpha-linked oligosaccharide from growing alpha-1,4-glucan chains and the subsequent attachment of the oligosaccharide to the alpha-1,6 position. The polypeptide is 1,4-alpha-glucan branching enzyme GlgB (Synechococcus sp. (strain JA-3-3Ab) (Cyanobacteria bacterium Yellowstone A-Prime)).